Here is an 868-residue protein sequence, read N- to C-terminus: MNATKELTFNLLNKFQDKERFGSAQRHAGISLKGFISGILFSFLYFLFQLSLFIILRSRFKTIYQANVVLKIHPGSKVCFAKKKIKNYWSLFAFLKQLPGRMLDPMEKFERNERYGLDNYLFLRFLKLLIFFFAVLSIINIPILIPIHYFSRDILKENEGERYEQSFRTTSKLDKWTMSNLSPNSSNTLICHLFLSIFVVLWFHFILSSELRFVNRLGYSVLTKSKYQNILYLEGFSSKLVTQSISLETFFQPLHSDCFGVTHFIPKNLKKVHKLEIKLNKLQKSKEQIIFEIILEKYFRRVSIHRHLIANHKRFFFSKLKNHLLFQYKKLVFLTQFRISYYCTKIRLRWKKSSIFPLYYPKLYVNTETILERKYRILDKIIRKEKLIKFQVNSLKATSETKQALPDDLSSGTDIYMDKMFITFKSTLLSNVIGELLSYRLPTQNLKVIIGPNVNDIIWRNILDSSPLWKSAKYFSANILRIFVIIGWILPVAFLGLISQIPNISSLIPFTKIIHFQSPFIREVAKNLIPIVTLIIIIEIVPYFFRWLSYLRGLKTGAQIEADVQNWYFVFVFIHLFVVVTISSGFSIIIERLLNNPVSIPALLANDLPKCANFFCSFVLIRGMAYAGGNLLRIKELLFELFYYKWKRSTPHAQFKRLKTSLFFQLGSIYPIFSVLGCIGIIYSVVAPIILLLCCISFSMVFFSFSYLFKYQYNKENYSETFGKLYIQALMQLYAGIYFMEFCLLGLFTLFDQYTLSTIMLVVFALTVITHSKISKQIKSKPQRIPTLEYLSNLTEERKDQFCQESYTFHDIFSICRNSDEIWLPRDKLGISEEEQSFLEKSYHLKFDLNMYSMNLFGDCHLENSHLH.

Over 1-34 (MNATKELTFNLLNKFQDKERFGSAQRHAGISLKG) the chain is Extracellular. The N-linked (GlcNAc...) asparagine glycan is linked to N2. A helical transmembrane segment spans residues 35–55 (FISGILFSFLYFLFQLSLFII). Topologically, residues 56 to 127 (LRSRFKTIYQ…DNYLFLRFLK (72 aa)) are cytoplasmic. Residues 128–148 (LLIFFFAVLSIINIPILIPIH) traverse the membrane as a helical segment. Residues 149-187 (YFSRDILKENEGERYEQSFRTTSKLDKWTMSNLSPNSSN) lie on the Extracellular side of the membrane. N184 carries an N-linked (GlcNAc...) asparagine glycan. Residues 188–208 (TLICHLFLSIFVVLWFHFILS) form a helical membrane-spanning segment. At 209 to 481 (SELRFVNRLG…AKYFSANILR (273 aa)) the chain is on the cytoplasmic side. The chain crosses the membrane as a helical span at residues 482–502 (IFVIIGWILPVAFLGLISQIP). N-linked (GlcNAc...) asparagine glycosylation occurs at N503. The Extracellular segment spans residues 503–527 (NISSLIPFTKIIHFQSPFIREVAKN). A helical membrane pass occupies residues 528–548 (LIPIVTLIIIIEIVPYFFRWL). The Cytoplasmic segment spans residues 549–569 (SYLRGLKTGAQIEADVQNWYF). The helical transmembrane segment at 570-590 (VFVFIHLFVVVTISSGFSIII) threads the bilayer. The Extracellular segment spans residues 591–611 (ERLLNNPVSIPALLANDLPKC). The chain crosses the membrane as a helical span at residues 612 to 632 (ANFFCSFVLIRGMAYAGGNLL). At 633–660 (RIKELLFELFYYKWKRSTPHAQFKRLKT) the chain is on the cytoplasmic side. The chain crosses the membrane as a helical span at residues 661–683 (SLFFQLGSIYPIFSVLGCIGIIY). The Extracellular portion of the chain corresponds to 684-692 (SVVAPIILL). Residues 693–713 (LCCISFSMVFFSFSYLFKYQY) traverse the membrane as a helical segment. Topologically, residues 714 to 730 (NKENYSETFGKLYIQAL) are cytoplasmic. The chain crosses the membrane as a helical span at residues 731–751 (MQLYAGIYFMEFCLLGLFTLF). Residues 752–753 (DQ) are Extracellular-facing. A helical membrane pass occupies residues 754 to 774 (YTLSTIMLVVFALTVITHSKI). Topologically, residues 775–868 (SKQIKSKPQR…DCHLENSHLH (94 aa)) are cytoplasmic.

This sequence belongs to the CSC1 (TC 1.A.17) family.

It localises to the membrane. In terms of biological role, acts as an osmosensitive calcium-permeable cation channel. Required for spore wall assembly and ascus formation. In Saccharomyces cerevisiae (strain ATCC 204508 / S288c) (Baker's yeast), this protein is Sporulation-specific protein 75 (SPO75).